The primary structure comprises 130 residues: Small ribosomal subunit protein uS9 (130 aa).

The segment at 98-130 (LKRAGLLTRDPRMKERKKPGLKKARRSPQFSKR) is disordered. The segment covering 111–130 (KERKKPGLKKARRSPQFSKR) has biased composition (basic residues).

Belongs to the universal ribosomal protein uS9 family.

The polypeptide is Small ribosomal subunit protein uS9 (Staphylococcus epidermidis (strain ATCC 35984 / DSM 28319 / BCRC 17069 / CCUG 31568 / BM 3577 / RP62A)).